The sequence spans 392 residues: Solute carrier family 35 member B1 (392 aa).

A disordered region spans residues 1–40 (MSLTKKIKNEKSLKQEKQTDQLKSNLRNNNNNINNKSKPK). The segment covering 7–20 (IKNEKSLKQEKQTD) has biased composition (basic and acidic residues). A compositionally biased stretch (low complexity) spans 25 to 35 (NLRNNNNNINN). The next 9 membrane-spanning stretches (helical) occupy residues 57–77 (ELFFIFCVGGIYIFYLLYGLV), 97–117 (AFLLALQCFFNMVSAWLVSLV), 124–144 (NTPFMKYGFVSMLLVISTFLS), 155–175 (TQVLAKSCKPIPVIFMGLLLF), 179–199 (YPFLKYIVVIVISLGISLFML), 215–235 (HLFGNFILFVSLMMDGVMGPF), 247–267 (ATSMMLNTNIWNLGLFSIMAF), 285–305 (VIKLILAFCITSAIGQQFIFL), and 341–361 (LQWAAICMVFGGLILDLYISY). A Di-lysine motif motif is present at residues 389–392 (KKSL).

This sequence belongs to the nucleotide-sugar transporter family. SLC35B subfamily.

The protein resides in the endoplasmic reticulum membrane. Probable sugar transporter. The chain is Solute carrier family 35 member B1 (slc35b1) from Dictyostelium discoideum (Social amoeba).